The following is a 612-amino-acid chain: Dihydroxy-acid dehydratase (612 aa).

Position 81 (Asp-81) interacts with Mg(2+). [2Fe-2S] cluster is bound at residue Cys-122. The Mg(2+) site is built by Asp-123 and Lys-124. Lys-124 carries the post-translational modification N6-carboxylysine. Position 195 (Cys-195) interacts with [2Fe-2S] cluster. Mg(2+) is bound at residue Glu-491. Ser-517 serves as the catalytic Proton acceptor.

Belongs to the IlvD/Edd family. Homodimer. Requires [2Fe-2S] cluster as cofactor. Mg(2+) is required as a cofactor.

The enzyme catalyses (2R)-2,3-dihydroxy-3-methylbutanoate = 3-methyl-2-oxobutanoate + H2O. It carries out the reaction (2R,3R)-2,3-dihydroxy-3-methylpentanoate = (S)-3-methyl-2-oxopentanoate + H2O. It participates in amino-acid biosynthesis; L-isoleucine biosynthesis; L-isoleucine from 2-oxobutanoate: step 3/4. The protein operates within amino-acid biosynthesis; L-valine biosynthesis; L-valine from pyruvate: step 3/4. Functions in the biosynthesis of branched-chain amino acids. Catalyzes the dehydration of (2R,3R)-2,3-dihydroxy-3-methylpentanoate (2,3-dihydroxy-3-methylvalerate) into 2-oxo-3-methylpentanoate (2-oxo-3-methylvalerate) and of (2R)-2,3-dihydroxy-3-methylbutanoate (2,3-dihydroxyisovalerate) into 2-oxo-3-methylbutanoate (2-oxoisovalerate), the penultimate precursor to L-isoleucine and L-valine, respectively. The protein is Dihydroxy-acid dehydratase of Rhizobium etli (strain CIAT 652).